The following is a 169-amino-acid chain: NADH-quinone oxidoreductase subunit B (169 aa).

The [4Fe-4S] cluster site is built by Cys-42, Cys-43, Cys-107, and Cys-136.

This sequence belongs to the complex I 20 kDa subunit family. NDH-1 is composed of 14 different subunits. Subunits NuoB, C, D, E, F, and G constitute the peripheral sector of the complex. The cofactor is [4Fe-4S] cluster.

Its subcellular location is the cell inner membrane. The enzyme catalyses a quinone + NADH + 5 H(+)(in) = a quinol + NAD(+) + 4 H(+)(out). In terms of biological role, NDH-1 shuttles electrons from NADH, via FMN and iron-sulfur (Fe-S) centers, to quinones in the respiratory chain. The immediate electron acceptor for the enzyme in this species is believed to be ubiquinone. Couples the redox reaction to proton translocation (for every two electrons transferred, four hydrogen ions are translocated across the cytoplasmic membrane), and thus conserves the redox energy in a proton gradient. This Sulfurimonas denitrificans (strain ATCC 33889 / DSM 1251) (Thiomicrospira denitrificans (strain ATCC 33889 / DSM 1251)) protein is NADH-quinone oxidoreductase subunit B.